Here is a 154-residue protein sequence, read N- to C-terminus: Ribonuclease P protein component (154 aa).

This sequence belongs to the RnpA family. As to quaternary structure, consists of a catalytic RNA component (M1 or rnpB) and a protein subunit.

It carries out the reaction Endonucleolytic cleavage of RNA, removing 5'-extranucleotides from tRNA precursor.. Its function is as follows. RNaseP catalyzes the removal of the 5'-leader sequence from pre-tRNA to produce the mature 5'-terminus. It can also cleave other RNA substrates such as 4.5S RNA. The protein component plays an auxiliary but essential role in vivo by binding to the 5'-leader sequence and broadening the substrate specificity of the ribozyme. The protein is Ribonuclease P protein component of Chlorobaculum tepidum (strain ATCC 49652 / DSM 12025 / NBRC 103806 / TLS) (Chlorobium tepidum).